The chain runs to 1085 residues: RecBCD enzyme subunit RecC (1085 aa).

The protein belongs to the RecC family. As to quaternary structure, heterotrimer of RecB, RecC and RecD. All subunits contribute to DNA-binding.

A helicase/nuclease that prepares dsDNA breaks (DSB) for recombinational DNA repair. Binds to DSBs and unwinds DNA via a highly rapid and processive ATP-dependent bidirectional helicase activity. Holoenzyme degrades any linearized DNA that is unable to undergo homologous recombination. In the holoenzyme this subunit recognizes the wild-type Chi sequence, and when added to isolated RecB increases its ATP-dependent helicase processivity. Unlike the case in E.coli, suppresses RecA-dependent homologous recombination, is instead required for single-strand annealing pathway repair of DSB. This is RecBCD enzyme subunit RecC from Mycolicibacterium smegmatis (strain ATCC 700084 / mc(2)155) (Mycobacterium smegmatis).